The chain runs to 492 residues: Zn(2)-C6 fungal-type transcription factor (492 aa).

A DNA-binding region (zn(2)-C6 fungal-type) is located at residues 14-41; it reads CRRCKNRKIKCDEVHPRCGNCAKHGVPC. The segment at 58–119 is disordered; that stretch reads TSTESVGAPT…QPSISSSTNT (62 aa). The segment covering 78–95 has biased composition (low complexity); it reads SAPRTPLTRPRAPSSPAR. Position 82 is a phosphothreonine (threonine 82). Phosphoserine occurs at positions 92 and 102. Polar residues predominate over residues 107 to 119; sequence VYSQPSISSSTNT. Phosphothreonine is present on threonine 217. A Phosphoserine modification is found at serine 305.

Interacts with HOG1. Post-translationally, phosphorylation at Thr-82, Ser-92, Ser-102, thr-117 and ser-305 by HOG1 is required for regulating expression of ergosterol biosynthesis genes.

The protein localises to the nucleus. Functionally, transcription factor that targets gene promoters containing 2 conserved CGAA repeat sequences. Positively regulates the expression of ergosterol biosynthesis genes including CYP51A and CYP51B encoding the sterol 14-alpha demethylase, and ERG6A and ERG6B encoding the sterol 24-C-methyltransferase. The protein is Zn(2)-C6 fungal-type transcription factor of Gibberella zeae (strain ATCC MYA-4620 / CBS 123657 / FGSC 9075 / NRRL 31084 / PH-1) (Wheat head blight fungus).